We begin with the raw amino-acid sequence, 532 residues long: Glucose-6-phosphate isomerase (532 aa).

The active-site Proton donor is E330. Residues H359 and K461 contribute to the active site.

This sequence belongs to the GPI family.

The protein resides in the cytoplasm. The enzyme catalyses alpha-D-glucose 6-phosphate = beta-D-fructose 6-phosphate. It participates in carbohydrate biosynthesis; gluconeogenesis. The protein operates within carbohydrate degradation; glycolysis; D-glyceraldehyde 3-phosphate and glycerone phosphate from D-glucose: step 2/4. Functionally, catalyzes the reversible isomerization of glucose-6-phosphate to fructose-6-phosphate. In Synechococcus sp. (strain CC9902), this protein is Glucose-6-phosphate isomerase.